Consider the following 810-residue polypeptide: Chloride channel protein (810 aa).

Residues 2–48 lie on the Cytoplasmic side of the membrane; it reads SHEKNEASGNPEAQSWKAQEAMLGVKTEVSRWRAVKNCLYRHLVKVL. 2 helical membrane passes run 49-86 and 93-116; these read GEDW…LFAM and LQYL…CQIV. The Selectivity filter part_1 motif lies at 122–126; the sequence is GSGIP. Serine 123 serves as a coordination point for chloride. The segment at residues 125–132 is an intramembrane region (helical); that stretch reads IPELKTII. Transmembrane regions (helical) follow at residues 141-160 and 166-184; these read LTLR…LSAG and EGPF…NQLL. Positions 164–168 match the Selectivity filter part_2 motif; it reads GKEGP. 2 consecutive intramembrane regions (helical) follow at residues 201-213 and 217-225; these read ILTV…ISCC and PLAGVLFSI. Transmembrane regions (helical) follow at residues 237–254, 283–311, and 320–339; these read YWRG…FRVL, LPAF…IVFM, and ILKK…LATL. A glycan (N-linked (GlcNAc...) asparagine) is linked at asparagine 365. 2 helical membrane-spanning segments follow: residues 389-408 and 416-439; these read NIFI…AALA and GAFV…MALL. The Selectivity filter part_3 motif lies at 416–420; it reads GAFVP. Phenylalanine 418 is a binding site for chloride. An intramembrane region (helical) is located at residues 456–470; sequence GEYAVIGAAAMTGAV. Positions 471–472 form an intramembrane region, note=Loop between two helices; that stretch reads TH. The segment at residues 473-484 is an intramembrane region (helical); the sequence is AVSTAVICFELT. The note=Loop between two helices intramembrane region spans 485–489; sequence GQISH. The helical transmembrane segment at 490 to 506 threads the bilayer; it reads VLPMMVAVILANMVAQG. Residues 507–810 lie on the Cytoplasmic side of the membrane; the sequence is LQPSLYDSII…RTATSNSSGK (304 aa). Tyrosine 512 provides a ligand contact to chloride. In terms of domain architecture, CBS 1 spans 543–601; that stretch reads MVRDVTSIASTSTYGDLLHVLRQTKLKFFPFVDTPETNTLLGSIERTEVEGLLQRRISA. Disordered stretches follow at residues 604 to 631 and 658 to 688; these read RQPA…DVPG and KVQT…KHKG. Residues 724–781 enclose the CBS 2 domain; it reads IDQSPFQLVEGTSLQKTHTLFSLLGLDRAYVTSMGKLVGVVALAEIQAAIEGSYQKGF.

The protein belongs to the chloride channel (TC 2.A.49) family. ClC-0 subfamily. In terms of assembly, homodimer. Each subunit has channel activity ('Double barreled channel').

It is found in the membrane. Its function is as follows. Voltage-gated chloride channel. This channel is thought to ensure the high conductance of the non-innervated membrane of the electrocyte necessary for efficient current generation caused by sodium influx through the acetylcholine receptor at the innervated membrane. This Tetronarce californica (Pacific electric ray) protein is Chloride channel protein.